A 513-amino-acid chain; its full sequence is GMP synthase [glutamine-hydrolyzing] (513 aa).

The 190-residue stretch at 9–198 (LILVLDFGSQ…VRRVCDCKGQ (190 aa)) folds into the Glutamine amidotransferase type-1 domain. The active-site Nucleophile is Cys-86. Residues His-172 and Glu-174 contribute to the active site. Residues 199–388 (WTMENFIEIE…LGIPEHLVWR (190 aa)) form the GMPS ATP-PPase domain. 226–232 (SGGVDSS) lines the ATP pocket.

In terms of assembly, homodimer.

The enzyme catalyses XMP + L-glutamine + ATP + H2O = GMP + L-glutamate + AMP + diphosphate + 2 H(+). The protein operates within purine metabolism; GMP biosynthesis; GMP from XMP (L-Gln route): step 1/1. Its function is as follows. Catalyzes the synthesis of GMP from XMP. This is GMP synthase [glutamine-hydrolyzing] from Staphylococcus aureus (strain Mu3 / ATCC 700698).